Here is a 398-residue protein sequence, read N- to C-terminus: Mannitol-1-phosphate 5-dehydrogenase (398 aa).

10–21 contributes to the NAD(+) binding site; it reads AVHFGAGNIGRG. Residue K221 is part of the active site.

Belongs to the mannitol dehydrogenase family. As to quaternary structure, monomer.

It catalyses the reaction D-mannitol 1-phosphate + NAD(+) = beta-D-fructose 6-phosphate + NADH + H(+). Catalyzes the NAD(H)-dependent interconversion of D-fructose 6-phosphate and D-mannitol 1-phosphate in the mannitol metabolic pathway. The sequence is that of Mannitol-1-phosphate 5-dehydrogenase from Chaetomium globosum (strain ATCC 6205 / CBS 148.51 / DSM 1962 / NBRC 6347 / NRRL 1970) (Soil fungus).